The sequence spans 265 residues: Capsule polysaccharide export inner-membrane protein BexB (265 aa).

6 helical membrane-spanning segments follow: residues 37-57, 64-84, 118-138, 151-171, 178-198, and 235-255; these read IGFF…VMMW, KFST…AMMW, LLEV…LVMI, LIAW…ICAI, FGKI…AFFF, and ESIG…LVMV. Residues 37-258 enclose the ABC transmembrane type-2 domain; that stretch reads IGFFWLFVEP…LLGLVMVKNF (222 aa).

This sequence belongs to the ABC-2 integral membrane protein family.

The protein localises to the cell inner membrane. Its function is as follows. May form an ATP-driven capsule polysaccharide export apparatus, in association with the BexA, BexC and BexD proteins. This chain is Capsule polysaccharide export inner-membrane protein BexB (bexB), found in Haemophilus influenzae.